Here is a 352-residue protein sequence, read N- to C-terminus: Chorismate synthase (352 aa).

Position 48 (R48) interacts with NADP(+). Residues 125-127 (RSS), 237-238 (NA), G278, 293-297 (KPTSS), and R319 each bind FMN.

This sequence belongs to the chorismate synthase family. Homotetramer. FMNH2 serves as cofactor.

The catalysed reaction is 5-O-(1-carboxyvinyl)-3-phosphoshikimate = chorismate + phosphate. It participates in metabolic intermediate biosynthesis; chorismate biosynthesis; chorismate from D-erythrose 4-phosphate and phosphoenolpyruvate: step 7/7. Functionally, catalyzes the anti-1,4-elimination of the C-3 phosphate and the C-6 proR hydrogen from 5-enolpyruvylshikimate-3-phosphate (EPSP) to yield chorismate, which is the branch point compound that serves as the starting substrate for the three terminal pathways of aromatic amino acid biosynthesis. This reaction introduces a second double bond into the aromatic ring system. This is Chorismate synthase from Francisella tularensis subsp. holarctica (strain FTNF002-00 / FTA).